A 107-amino-acid polypeptide reads, in one-letter code: Large ribosomal subunit protein uL24 (107 aa).

It belongs to the universal ribosomal protein uL24 family. As to quaternary structure, part of the 50S ribosomal subunit.

Its function is as follows. One of two assembly initiator proteins, it binds directly to the 5'-end of the 23S rRNA, where it nucleates assembly of the 50S subunit. In terms of biological role, one of the proteins that surrounds the polypeptide exit tunnel on the outside of the subunit. The sequence is that of Large ribosomal subunit protein uL24 from Malacoplasma penetrans (strain HF-2) (Mycoplasma penetrans).